Consider the following 229-residue polypeptide: Flagellar brake protein YcgR (229 aa).

A PilZ domain is found at 134-218 (QLSLRVLDVS…GERALQRYID (85 aa)).

The protein belongs to the YcgR family. As to quaternary structure, monomer. Interacts with the flagellar basal bodies.

It is found in the bacterial flagellum basal body. Its function is as follows. Acts as a flagellar brake, regulating swimming and swarming in a bis-(3'-5') cyclic diguanylic acid (c-di-GMP)-dependent manner. Binds 1 c-di-GMP dimer per subunit. Increasing levels of c-di-GMP lead to decreased motility. This is Flagellar brake protein YcgR from Methylibium petroleiphilum (strain ATCC BAA-1232 / LMG 22953 / PM1).